The following is a 355-amino-acid chain: Guanine nucleotide-binding protein G(i) subunit alpha-2 (355 aa).

Gly-2 is lipidated: N-myristoyl glycine. The S-palmitoyl cysteine moiety is linked to residue Cys-3. A G-alpha domain is found at 32–355 (REVKLLLLGA…KNNLKDCGLF (324 aa)). Residues 35 to 48 (KLLLLGAGESGKST) form a G1 motif region. Residues 40-47 (GAGESGKS), 176-182 (LRTRVKT), 201-205 (DVGGQ), 270-273 (NKKD), and Ala-327 each bind GTP. Ser-47 and Thr-182 together coordinate Mg(2+). The segment at 174-182 (DVLRTRVKT) is G2 motif. The tract at residues 197-206 (FKMFDVGGQR) is G3 motif. Residues 266–273 (ILFLNKKD) form a G4 motif region. The segment at 325–330 (TCATDT) is G5 motif.

This sequence belongs to the G-alpha family. G(i/o/t/z) subfamily. G proteins are composed of 3 units; alpha, beta and gamma. The alpha chain contains the guanine nucleotide binding site. In this context, interacts with GNB2. Interacts with UNC5B. Interacts with GPSM1. Interacts with RGS12 and RGS14. Interacts (inactive GDP-bound form) with NUCB1 (via GBA motif); the interaction leads to activation of GNAI3. Interacts (inactive GDP-bound form) with CCDC88C/DAPLE (via GBA motif). Interacts (inactive GDP-bound form) with CCDC8A/GIV (via GBA motif). Interacts with CXCR1 and CXCR2.

The protein localises to the cytoplasm. It is found in the cytoskeleton. It localises to the microtubule organizing center. The protein resides in the centrosome. Its subcellular location is the cell membrane. The protein localises to the membrane. Functionally, guanine nucleotide-binding proteins (G proteins) are involved as modulators or transducers in various transmembrane signaling systems. The G(i) proteins are involved in hormonal regulation of adenylate cyclase: they inhibit the cyclase in response to beta-adrenergic stimuli. May play a role in cell division. The polypeptide is Guanine nucleotide-binding protein G(i) subunit alpha-2 (GNAI2) (Canis lupus familiaris (Dog)).